Consider the following 1670-residue polypeptide: Collagen alpha-3(IV) chain (1670 aa).

Positions 1–28 (MSARTAPRPQVLLLPLLLVLLAAAPAAS) are cleaved as a signal peptide. A 7S domain region spans residues 29–42 (KGCVCKDKGQCFCD). Positions 43–1438 (GAKGEKGEKG…KGKRGDSGSP (1396 aa)) are triple-helical region. 3 disordered regions span residues 49–78 (GEKGFPGPPGSPGQKGFTGPEGLPGPQGPK), 167–469 (LDAK…DGPK), and 502–1442 (GRQG…ATWT). Pro residues predominate over residues 176–200 (PGAPGPQGLPGPPGFPGPVGPPGPP). Positions 202 to 212 (FFGFPGAMGPR) are enriched in low complexity. A compositionally biased stretch (basic and acidic residues) spans 217 to 231 (HMGERVIGHKGERGV). Residues 242-251 (GTVIVTLTGP) show a composition bias toward low complexity. Asn253 carries an N-linked (GlcNAc...) asparagine glycan. Residues 253–266 (NRTDLKGEKGDKGA) are compositionally biased toward basic and acidic residues. A compositionally biased stretch (low complexity) spans 382–394 (SPGSSRPGLRGAP). Residues 402-411 (SKGERGRPGK) are compositionally biased toward basic and acidic residues. Residues 415-428 (GTPGSPGCAGSPGL) are compositionally biased toward low complexity. Composition is skewed to pro residues over residues 429–438 (PGSPGPPGPP), 598–618 (PGDPGSPGSPGPAGPAGPPGY), and 654–675 (VPGPPGPPGPPGHPGPQGPPGI). Positions 791–793 (RGD) match the Cell attachment site motif. Pro residues predominate over residues 900–909 (IGPPGPPGNP). Positions 974–987 (VPGMPGLKGLKGLP) are enriched in low complexity. A Cell attachment site motif is present at residues 996–998 (RGD). Composition is skewed to low complexity over residues 1013 to 1025 (IPGSMGNMGMPGS), 1094 to 1105 (LGPAGPEGAPGS), and 1118 to 1133 (HGDLGFKGIKGLLGPP). A compositionally biased stretch (pro residues) spans 1135-1148 (IRGPPGLPGFPGSP). Positions 1154 to 1156 (RGD) match the Cell attachment site motif. 2 stretches are compositionally biased toward low complexity: residues 1230–1250 (PGAIIPGQTGNRGPPGSRGSP) and 1290–1299 (PPGRLGAPGT). Positions 1306 to 1308 (RGD) match the Cell attachment site motif. A compositionally biased stretch (pro residues) spans 1332–1341 (PPGPIGPKGP). 2 consecutive short sequence motifs (cell attachment site) follow at residues 1345–1347 (RGD) and 1432–1434 (RGD). The segment at 1427–1444 (GLKGKRGDSGSPATWTTR) is epitope recognized by Goodpasture antibodies. The Collagen IV NC1 domain maps to 1445-1669 (GFVFTRHSQT…SRCQVCMKKR (225 aa)). 6 cysteine pairs are disulfide-bonded: Cys1460/Cys1551, Cys1493/Cys1548, Cys1505/Cys1511, Cys1570/Cys1665, Cys1604/Cys1662, and Cys1616/Cys1622. The segment at 1479-1557 (NQRAHGQDLG…CTVCEGPAIA (79 aa)) is required for the anti-angiogenic activity of tumstatin. Met1533 is covalently cross-linked (S-Lysyl-methionine sulfilimine (Met-Lys) (interchain with K-1651)). A required for the anti-tumor cell activity of tumstatin region spans residues 1610-1628 (ASPFLECHGRGTCNYYSNS). Lys1651 participates in a covalent cross-link: S-Lysyl-methionine sulfilimine (Lys-Met) (interchain with M-1533).

Belongs to the type IV collagen family. As to quaternary structure, there are six type IV collagen isoforms, alpha 1(IV)-alpha 6(IV), each of which can form a triple helix structure with 2 other chains to generate type IV collagen network. The alpha 3(IV) chain forms a triple helical protomer with alpha 4(IV) and alpha 5(IV); this triple helical structure dimerizes through NC1-NC1 domain interactions such that the alpha 3(IV), alpha 4(IV) and alpha 5(IV) chains of one protomer connect with the alpha 5(IV), alpha 4(IV) and alpha 3(IV) chains of the opposite promoter, respectively. Interacts with ITGB3. Associates with LAMB2 at the neuromuscular junction and in GBM. Post-translationally, prolines at the third position of the tripeptide repeating unit (G-X-Y) are hydroxylated in some or all of the chains. Isoform 2 contains an additional N-linked glycosylation site. In terms of processing, type IV collagens contain numerous cysteine residues which are involved in inter- and intramolecular disulfide bonding. 12 of these, located in the NC1 domain, are conserved in all known type IV collagens. Post-translationally, the trimeric structure of the NC1 domains is stabilized by covalent bonds between Lys and Met residues. Phosphorylated. Thought to be phosphorylated by CERT, but CERT does not have kinase activity. As to expression, alpha 3 and alpha 4 type IV collagens are colocalized and present in kidney, eye, basement membranes of lens capsule, cochlea, lung, skeletal muscle, aorta, synaptic fibers, fetal kidney and fetal lung. PubMed:8083201 reports similar levels of expression of alpha 3 and alpha 4 type IV collagens in kidney, but PubMed:7523402 reports that in kidney levels of alpha 3 type IV collagen are significantly lower than those of alpha 4 type IV collagen. According to PubMed:8083201, alpha 3 type IV collagen is not detected in heart, brain, placenta, liver, pancreas, extrasynaptic muscle fibers, endoneurial and perineurial nerves, fetal brain, fetal heart and fetal liver. According to PubMed:7523402, alpha 3 type IV collagen is strongly expressed in pancreas, neuroretina and calvaria and not expressed in adrenal, ileum and skin. Isoform 1 and isoform 3 are strongly expressed in kidney, lung, suprarenal capsule, muscle and spleen, in each of these tissues isoform 1 is more abundant than isoform 3. Isoform 1 and isoform 3 are expressed at low levels in artery, fat, pericardium and peripherical nerve, but not in placenta, mesangium, skin, pleura and cultured umbilical endothelial cells.

Its subcellular location is the secreted. The protein localises to the extracellular space. It localises to the extracellular matrix. The protein resides in the basement membrane. Its function is as follows. Type IV collagen is the major structural component of glomerular basement membranes (GBM), forming a 'chicken-wire' meshwork together with laminins, proteoglycans and entactin/nidogen. Tumstatin, a cleavage fragment corresponding to the collagen alpha 3(IV) NC1 domain, possesses both anti-angiogenic and anti-tumor cell activity; these two anti-tumor properties may be regulated via RGD-independent ITGB3-mediated mechanisms. The sequence is that of Collagen alpha-3(IV) chain (COL4A3) from Homo sapiens (Human).